Consider the following 257-residue polypeptide: Transmembrane protein C257L (257 aa).

Transmembrane regions (helical) follow at residues 123–143 (LELL…FTAL) and 163–183 (IMIF…YVLV).

Belongs to the asfivirus C257R family.

Its subcellular location is the host membrane. The protein localises to the virion. The sequence is that of Transmembrane protein C257L from African swine fever virus (isolate Pig/Kenya/KEN-50/1950) (ASFV).